Here is a 313-residue protein sequence, read N- to C-terminus: HPr kinase/phosphorylase (313 aa).

Catalysis depends on residues histidine 136 and lysine 157. An ATP-binding site is contributed by 151–158 (GDSGIGKS). Serine 158 serves as a coordination point for Mg(2+). Residue aspartate 175 is the Proton acceptor; for phosphorylation activity. Proton donor; for dephosphorylation activity of the active site. Residues 199 to 208 (LEIRGLGIIN) are important for the catalytic mechanism of both phosphorylation and dephosphorylation. Glutamate 200 is a Mg(2+) binding site. Arginine 241 is an active-site residue. The important for the catalytic mechanism of dephosphorylation stretch occupies residues 262 to 267 (PVRPGR).

Belongs to the HPrK/P family. As to quaternary structure, homohexamer. Requires Mg(2+) as cofactor.

It carries out the reaction [HPr protein]-L-serine + ATP = [HPr protein]-O-phospho-L-serine + ADP + H(+). The catalysed reaction is [HPr protein]-O-phospho-L-serine + phosphate + H(+) = [HPr protein]-L-serine + diphosphate. In terms of biological role, catalyzes the ATP- as well as the pyrophosphate-dependent phosphorylation of a specific serine residue in HPr, a phosphocarrier protein of the phosphoenolpyruvate-dependent sugar phosphotransferase system (PTS). HprK/P also catalyzes the pyrophosphate-producing, inorganic phosphate-dependent dephosphorylation (phosphorolysis) of seryl-phosphorylated HPr (P-Ser-HPr). The two antagonistic activities of HprK/P are regulated by several intracellular metabolites, which change their concentration in response to the absence or presence of rapidly metabolisable carbon sources (glucose, fructose, etc.) in the growth medium. Therefore, by controlling the phosphorylation state of HPr, HPrK/P is a sensor enzyme that plays a major role in the regulation of carbon metabolism and sugar transport: it mediates carbon catabolite repression (CCR), and regulates PTS-catalyzed carbohydrate uptake and inducer exclusion. This Staphylococcus saprophyticus subsp. saprophyticus (strain ATCC 15305 / DSM 20229 / NCIMB 8711 / NCTC 7292 / S-41) protein is HPr kinase/phosphorylase.